The primary structure comprises 328 residues: DNA-directed RNA polymerase subunit alpha (328 aa).

An alpha N-terminal domain (alpha-NTD) region spans residues 1 to 234 (MQNSPTEYLK…GQLSVFADLE (234 aa)). The segment at 248-328 (VDPILLRPVD…NWPPAGLEKV (81 aa)) is alpha C-terminal domain (alpha-CTD).

It belongs to the RNA polymerase alpha chain family. As to quaternary structure, homodimer. The RNAP catalytic core consists of 2 alpha, 1 beta, 1 beta' and 1 omega subunit. When a sigma factor is associated with the core the holoenzyme is formed, which can initiate transcription.

It carries out the reaction RNA(n) + a ribonucleoside 5'-triphosphate = RNA(n+1) + diphosphate. DNA-dependent RNA polymerase catalyzes the transcription of DNA into RNA using the four ribonucleoside triphosphates as substrates. The polypeptide is DNA-directed RNA polymerase subunit alpha (Methylobacillus flagellatus (strain ATCC 51484 / DSM 6875 / VKM B-1610 / KT)).